The chain runs to 37 residues: Large ribosomal subunit protein bL36 (37 aa).

It belongs to the bacterial ribosomal protein bL36 family.

This is Large ribosomal subunit protein bL36 from Desulfitobacterium hafniense (strain Y51).